The following is a 435-amino-acid chain: 3-phosphoshikimate 1-carboxyvinyltransferase (435 aa).

K21, S22, and R26 together coordinate 3-phosphoshikimate. K21 contributes to the phosphoenolpyruvate binding site. Residues G99 and R127 each contribute to the phosphoenolpyruvate site. S173, Q175, D323, and K350 together coordinate 3-phosphoshikimate. Q175 serves as a coordination point for phosphoenolpyruvate. Residue D323 is the Proton acceptor of the active site. R354 and R396 together coordinate phosphoenolpyruvate.

Belongs to the EPSP synthase family. In terms of assembly, monomer.

Its subcellular location is the cytoplasm. The catalysed reaction is 3-phosphoshikimate + phosphoenolpyruvate = 5-O-(1-carboxyvinyl)-3-phosphoshikimate + phosphate. It functions in the pathway metabolic intermediate biosynthesis; chorismate biosynthesis; chorismate from D-erythrose 4-phosphate and phosphoenolpyruvate: step 6/7. In terms of biological role, catalyzes the transfer of the enolpyruvyl moiety of phosphoenolpyruvate (PEP) to the 5-hydroxyl of shikimate-3-phosphate (S3P) to produce enolpyruvyl shikimate-3-phosphate and inorganic phosphate. This is 3-phosphoshikimate 1-carboxyvinyltransferase from Akkermansia muciniphila (strain ATCC BAA-835 / DSM 22959 / JCM 33894 / BCRC 81048 / CCUG 64013 / CIP 107961 / Muc).